The primary structure comprises 339 residues: Starvation-sensing protein RspB (339 aa).

Zn(2+)-binding residues include cysteine 37, histidine 59, cysteine 89, cysteine 92, cysteine 95, cysteine 103, and glutamate 144.

It belongs to the zinc-containing alcohol dehydrogenase family. Zn(2+) serves as cofactor.

Not known; probable catabolic enzyme. This is Starvation-sensing protein RspB from Escherichia coli (strain K12).